The following is a 940-amino-acid chain: Chromatin assembly factor 1 subunit FSM (940 aa).

3 disordered regions span residues 317–473, 638–682, and 919–940; these read NVDD…DPCT, VDSD…FFVP, and KTTQ…PSSQ. A compositionally biased stretch (polar residues) spans 320–329; the sequence is DSQLQKNTST. A coiled-coil region spans residues 329–439; it reads TNEKDTQKAQ…LKKQLAIQKQ (111 aa). Residues 330–429 show a composition bias toward basic and acidic residues; the sequence is NEKDTQKAQK…QKRREKEAVQ (100 aa). A compositionally biased stretch (low complexity) spans 430–440; the sequence is LKKQLAIQKQA. Over residues 445 to 461 the composition is skewed to basic and acidic residues; the sequence is RFFKNKKDSEKLEKPGG. Over residues 638-650 the composition is skewed to acidic residues; the sequence is VDSDDEWEEEDPG.

Belongs to the CHAF1A family. As to quaternary structure, component of the chromatin assembly factor 1 (CAF-1) complex, composed of FSM (FAS1), FAS2 and MSI1. In terms of tissue distribution, in embryo, expressed in leaf primordia, coleoptile and radicle. In seedlings, expressed in cell division zone of roots, SAM and leaf primordia. Expressed in floral organ primordia.

It localises to the nucleus. Component of the chromatin assembly factor complex (CAF-1) involved in chromatin assembly following DNA replication and DNA repair. Required for several aspects of development, including apical meristem maintenance by regulating the durations of the S- and G2-phases of the cell cycle through its chromatin assembly activity. The sequence is that of Chromatin assembly factor 1 subunit FSM (FSM) from Oryza sativa subsp. japonica (Rice).